Here is a 258-residue protein sequence, read N- to C-terminus: D-beta-hydroxybutyrate dehydrogenase (258 aa).

Residue 6–30 (VITGSTSGIGLAIARTLAKAGANIV) participates in NAD(+) binding. Ser140 contacts substrate. Tyr153 serves as the catalytic Proton acceptor.

Belongs to the short-chain dehydrogenases/reductases (SDR) family.

It catalyses the reaction (R)-3-hydroxybutanoate + NAD(+) = acetoacetate + NADH + H(+). The sequence is that of D-beta-hydroxybutyrate dehydrogenase (bdhA) from Rhizobium meliloti (strain 1021) (Ensifer meliloti).